We begin with the raw amino-acid sequence, 492 residues long: Probable cytosol aminopeptidase (492 aa).

Residues K262 and D267 each coordinate Mn(2+). K274 is a catalytic residue. Mn(2+) contacts are provided by D286, D345, and E347. R349 is a catalytic residue.

This sequence belongs to the peptidase M17 family. Mn(2+) serves as cofactor.

The protein localises to the cytoplasm. The enzyme catalyses Release of an N-terminal amino acid, Xaa-|-Yaa-, in which Xaa is preferably Leu, but may be other amino acids including Pro although not Arg or Lys, and Yaa may be Pro. Amino acid amides and methyl esters are also readily hydrolyzed, but rates on arylamides are exceedingly low.. It catalyses the reaction Release of an N-terminal amino acid, preferentially leucine, but not glutamic or aspartic acids.. Its function is as follows. Presumably involved in the processing and regular turnover of intracellular proteins. Catalyzes the removal of unsubstituted N-terminal amino acids from various peptides. The sequence is that of Probable cytosol aminopeptidase from Acaryochloris marina (strain MBIC 11017).